Reading from the N-terminus, the 401-residue chain is 1-deoxy-D-xylulose 5-phosphate reductoisomerase (401 aa).

NADPH contacts are provided by Thr-10, Gly-11, Ser-12, Ile-13, Asn-38, and Asn-124. Position 125 (Lys-125) interacts with 1-deoxy-D-xylulose 5-phosphate. Glu-126 contacts NADPH. A Mn(2+)-binding site is contributed by Asp-150. 1-deoxy-D-xylulose 5-phosphate-binding residues include Ser-151, Glu-152, Ser-186, and His-209. Residue Glu-152 coordinates Mn(2+). Gly-215 contributes to the NADPH binding site. 4 residues coordinate 1-deoxy-D-xylulose 5-phosphate: Ser-222, Asn-227, Lys-228, and Glu-231. A Mn(2+)-binding site is contributed by Glu-231.

This sequence belongs to the DXR family. Mg(2+) is required as a cofactor. The cofactor is Mn(2+).

It catalyses the reaction 2-C-methyl-D-erythritol 4-phosphate + NADP(+) = 1-deoxy-D-xylulose 5-phosphate + NADPH + H(+). It participates in isoprenoid biosynthesis; isopentenyl diphosphate biosynthesis via DXP pathway; isopentenyl diphosphate from 1-deoxy-D-xylulose 5-phosphate: step 1/6. Its function is as follows. Catalyzes the NADPH-dependent rearrangement and reduction of 1-deoxy-D-xylulose-5-phosphate (DXP) to 2-C-methyl-D-erythritol 4-phosphate (MEP). The polypeptide is 1-deoxy-D-xylulose 5-phosphate reductoisomerase (Vibrio campbellii (strain ATCC BAA-1116)).